A 900-amino-acid polypeptide reads, in one-letter code: Phospholipase DDHD1 (900 aa).

Disordered stretches follow at residues 1–28 (MNYP…ELGS), 100–152 (LRYY…GGPA), and 202–233 (GARP…DEDR). 2 positions are modified to phosphoserine: Ser8 and Ser11. A compositionally biased stretch (gly residues) spans 130–140 (SGGGGATGGSP). Ser537 is an active-site residue. The DDHD domain maps to 611–886 (LKFKVENFFC…ALFLLTFMYK (276 aa)). 2 disordered regions span residues 706 to 725 (AKEP…PSPV) and 768 to 801 (SSTT…TQTL). The span at 710–725 (TSVSENEGISTIPSPV) shows a compositional bias: polar residues. Ser723 bears the Phosphoserine mark. The span at 776–787 (TSKDSMEDEKKP) shows a compositional bias: basic and acidic residues. Polar residues predominate over residues 791–801 (PSATTVGTQTL).

Belongs to the PA-PLA1 family. In terms of assembly, forms homooligomers and, to a much smaller extent, heterooligomers with DDHD2. Highly expressed in testis. Also expressed in brain, spleen and lung. Only expressed in cerebellum in fetal brain.

Its subcellular location is the cytoplasm. It carries out the reaction a 1,2-diacyl-sn-glycero-3-phosphate + H2O = a 2-acyl-sn-glycerol 3-phosphate + a fatty acid + H(+). The enzyme catalyses a 1,2-diacyl-sn-glycero-3-phospho-(1D-myo-inositol) + H2O = a 2-acyl-sn-glycero-3-phospho-D-myo-inositol + a fatty acid + H(+). The catalysed reaction is 1-octadecanoyl-2-(5Z,8Z,11Z,14Z-eicosatetraenoyl)-sn-glycero-3-phospho-(1D-myo-inositol) + H2O = 2-(5Z,8Z,11Z,14Z-eicosatetraenoyl)-sn-glycero-3-phospho-(1D-myo-inositol) + octadecanoate + H(+). It catalyses the reaction a 1-acyl-2-(5Z,8Z,11Z,14Z-eicosatetraenoyl)-sn-glycero-3-phospho-(1D-myo-inositol) + H2O = 2-(5Z,8Z,11Z,14Z-eicosatetraenoyl)-sn-glycero-3-phospho-(1D-myo-inositol) + a fatty acid + H(+). It carries out the reaction 1,2-dihexadecanoyl-sn-glycero-3-phospho-(1D-myo-inositol) + H2O = 2-hexadecanoyl-sn-glycero-3-phospho-(1D-myo-inositol) + hexadecanoate + H(+). The enzyme catalyses a 1-acyl-2-(5Z,8Z,11Z,14Z)-eicosatetraenoyl-sn-glycero-3-phosphate + H2O = 2-(5Z,8Z,11Z,14Z-eicosatetraenoyl)-sn-glycero-3-phosphate + a fatty acid + H(+). The catalysed reaction is 1,2-di-(9Z-octadecenoyl)-sn-glycero-3-phosphate + H2O = 2-(9Z-octadecenoyl)-sn-glycero-3-phosphate + (9Z)-octadecenoate + H(+). It catalyses the reaction 1-hexadecanoyl-2-(9Z-octadecenoyl)-sn-glycero-3-phosphate + H2O = 2-(9Z-octadecenoyl)-sn-glycero-3-phosphate + hexadecanoate + H(+). It carries out the reaction 1-hexadecanoyl-2-(9Z-octadecenoyl)-sn-glycero-3-phospho-L-serine + H2O = 2-(9Z-octadecenoyl)-sn-glycero-3-phospho-L-serine + hexadecanoate + H(+). The enzyme catalyses 1,2-di-(5Z,8Z,11Z,14Z)-eicosatetraenoyl-sn-glycero-3-phosphate + H2O = 2-(5Z,8Z,11Z,14Z-eicosatetraenoyl)-sn-glycero-3-phosphate + (5Z,8Z,11Z,14Z)-eicosatetraenoate + H(+). The catalysed reaction is 1-octadecanoyl-2-(5Z,8Z,11Z,14Z-eicosatetraenoyl)-sn-glycero-3-phosphate + H2O = 2-(5Z,8Z,11Z,14Z-eicosatetraenoyl)-sn-glycero-3-phosphate + octadecanoate + H(+). It catalyses the reaction a 1,2-diacyl-sn-glycero-3-phosphocholine + H2O = a 2-acyl-sn-glycero-3-phosphocholine + a fatty acid + H(+). It carries out the reaction a 1,2-diacyl-sn-glycero-3-phosphoethanolamine + H2O = a 2-acyl-sn-glycero-3-phosphoethanolamine + a fatty acid + H(+). The enzyme catalyses a 1,2-diacyl-sn-glycero-3-phospho-L-serine + H2O = a 2-acyl-sn-glycero-3-phospho-L-serine + a fatty acid + H(+). The catalysed reaction is a 1,2-diacyl-sn-glycero-3-phospho-(1'-sn-glycerol) + H2O = 2-acyl-sn-glycero-3-phospho-(1'-sn-glycerol) + a fatty acid + H(+). It catalyses the reaction 1-hexadecanoyl-2-(9Z-octadecenoyl)-sn-glycero-3-phospho-(1'-sn-glycerol) + H2O = 2-(9Z-octadecenoyl)-sn-glycero-3-phospho-(1'-sn-glycerol) + hexadecanoate + H(+). It carries out the reaction 1-acyl-2-(5Z,8Z,11Z,14Z-eicosatetraenoyl)-sn-glycero-3-phosphocholine + H2O = 2-(5Z,8Z,11Z,14Z)-eicosatetraenoyl-sn-glycero-3-phosphocholine + a fatty acid + H(+). The enzyme catalyses 1-acyl-2-(5Z,8Z,11Z,14Z)-eicosatetraenoyl-sn-glycero-3-phosphoethanolamine + H2O = 2-(5Z,8Z,11Z,14Z)-eicosatetraenoyl-sn-glycero-3-phosphoethanolamine + a fatty acid + H(+). The catalysed reaction is 1-(9Z-octadecenoyl)-2-(7Z,10Z,13Z,16Z,19Z-docosapentaenoyl)-sn-glycero-3-phospho-1D-myo-inositol + H2O = 2-(7Z,10Z,13Z,16Z,19Z-docosapentaenoyl)-sn-glycero-3-phospho-1D-myo-inositol + (9Z)-octadecenoate + H(+). It catalyses the reaction 1-(9Z-octadecenoyl)-2-(5Z,8Z,11Z,14Z-eicosatetraenoyl)-sn-glycero-3-phospho-1D-myo-inositol + H2O = 2-(5Z,8Z,11Z,14Z-eicosatetraenoyl)-sn-glycero-3-phospho-(1D-myo-inositol) + (9Z)-octadecenoate + H(+). It carries out the reaction 1,2-di-(9Z-octadecenoyl)-sn-glycero-3-phospho-1D-myo-inositol + H2O = 2-(9Z-octadecenoyl)-sn-glycero-3-phospho-1D-myo-inositol + (9Z)-octadecenoate + H(+). The enzyme catalyses 1-(9Z-octadecenoyl)-2-(8Z,11Z,14Z-eicosatrienoyl)-sn-glycero-3-phospho-1D-myo-inositol + H2O = 2-(8Z,11Z,14Z-eicosatrienoyl)-sn-glycero-3-phospho-1D-myo-inositol + (9Z)-octadecenoate + H(+). The catalysed reaction is 1,2-di-(9Z-octadecenoyl)-sn-glycero-3-phosphocholine + H2O = (9Z-octadecenoyl)-sn-glycero-3-phosphocholine + (9Z)-octadecenoate + H(+). It participates in phospholipid metabolism; phosphatidylinositol metabolism. With respect to regulation, phosphatidate (1,2-diacyl-sn-glycero-3-phosphate, PA) can positively regulate phospholipase A1 activity. Functionally, phospholipase A1 (PLA1) that hydrolyzes ester bonds at the sn-1 position of glycerophospholipids producing a free fatty acid and a lysophospholipid. Prefers phosphatidate (1,2-diacyl-sn-glycero-3-phosphate, PA) as substrate in vitro, but can efficiently hydrolyze phosphatidylinositol (1,2-diacyl-sn-glycero-3-phospho-(1D-myo-inositol), PI), as well as a range of other glycerophospholipid substrates such as phosphatidylcholine (1,2-diacyl-sn-glycero-3-phosphocholine, PC), phosphatidylethanolamine (1,2-diacyl-sn-glycero-3-phosphoethanolamine, PE), phosphatidylserine (1,2-diacyl-sn-glycero-3-phospho-L-serine, PS) and phosphatidylglycerol (1,2-diacyl-sn-glycero-3-phospho-(1'-sn-glycerol), PG). Involved in the regulation of the endogenous content of polyunsaturated PI and PS lipids in the nervous system. Changes in these lipids extend to downstream metabolic products like PI phosphates PIP and PIP2, which play fundamental roles in cell biology. Regulates mitochondrial morphology. These dynamic changes may be due to PA hydrolysis at the mitochondrial surface. May play a regulatory role in spermatogenesis or sperm function. The protein is Phospholipase DDHD1 of Homo sapiens (Human).